We begin with the raw amino-acid sequence, 136 residues long: Small ribosomal subunit protein bS16 (136 aa).

Over residues 114–123 (TLKARRRRAK) the composition is skewed to basic residues. The interval 114–136 (TLKARRRRAKKEAEAASASSAEG) is disordered.

It belongs to the bacterial ribosomal protein bS16 family.

The protein is Small ribosomal subunit protein bS16 of Chlorobium chlorochromatii (strain CaD3).